The chain runs to 180 residues: Shikimate kinase (180 aa).

Residue 14 to 19 (GAGKSC) coordinates ATP. Ser18 contributes to the Mg(2+) binding site. Positions 36, 60, and 82 each coordinate substrate. Arg120 is an ATP binding site. Arg139 is a binding site for substrate.

Belongs to the shikimate kinase family. In terms of assembly, monomer. The cofactor is Mg(2+).

It is found in the cytoplasm. It carries out the reaction shikimate + ATP = 3-phosphoshikimate + ADP + H(+). Its pathway is metabolic intermediate biosynthesis; chorismate biosynthesis; chorismate from D-erythrose 4-phosphate and phosphoenolpyruvate: step 5/7. Its function is as follows. Catalyzes the specific phosphorylation of the 3-hydroxyl group of shikimic acid using ATP as a cosubstrate. The chain is Shikimate kinase from Xanthomonas oryzae pv. oryzae (strain PXO99A).